We begin with the raw amino-acid sequence, 299 residues long: Glycine--tRNA ligase alpha subunit (299 aa).

Belongs to the class-II aminoacyl-tRNA synthetase family. As to quaternary structure, tetramer of two alpha and two beta subunits.

The protein resides in the cytoplasm. It catalyses the reaction tRNA(Gly) + glycine + ATP = glycyl-tRNA(Gly) + AMP + diphosphate. The protein is Glycine--tRNA ligase alpha subunit of Dictyoglomus turgidum (strain DSM 6724 / Z-1310).